Consider the following 433-residue polypeptide: Glutamate-1-semialdehyde 2,1-aminomutase (433 aa).

The residue at position 269 (Lys269) is an N6-(pyridoxal phosphate)lysine.

It belongs to the class-III pyridoxal-phosphate-dependent aminotransferase family. HemL subfamily. As to quaternary structure, homodimer. It depends on pyridoxal 5'-phosphate as a cofactor.

It localises to the cytoplasm. It catalyses the reaction (S)-4-amino-5-oxopentanoate = 5-aminolevulinate. Its pathway is porphyrin-containing compound metabolism; protoporphyrin-IX biosynthesis; 5-aminolevulinate from L-glutamyl-tRNA(Glu): step 2/2. The protein is Glutamate-1-semialdehyde 2,1-aminomutase of Renibacterium salmoninarum (strain ATCC 33209 / DSM 20767 / JCM 11484 / NBRC 15589 / NCIMB 2235).